We begin with the raw amino-acid sequence, 98 residues long: Putative defensin-like protein 239 (98 aa).

Positions 1-23 are cleaved as a signal peptide; that stretch reads MRYTTSFIGLCFLIFLLKNLVNG. Intrachain disulfides connect Cys-29–Cys-89, Cys-39–Cys-69, Cys-47–Cys-86, and Cys-67–Cys-88.

This sequence belongs to the DEFL family.

The protein localises to the secreted. This chain is Putative defensin-like protein 239 (SCRL17), found in Arabidopsis thaliana (Mouse-ear cress).